Reading from the N-terminus, the 264-residue chain is Non-homologous end-joining factor xrc4 (264 aa).

Residues 173-186 show a composition bias toward basic and acidic residues; the sequence is RNNEDNEDNHHINY. A disordered region spans residues 173–264; that stretch reads RNNEDNEDNH…SHESSETVSE (92 aa). Residues 200-209 are compositionally biased toward polar residues; sequence QEGVNSSAVS. The segment covering 248–264 has biased composition (basic and acidic residues); sequence DDSHRRSSHESSETVSE.

It belongs to the XRCC4-XLF family. XRCC4 subfamily. As to quaternary structure, interacts with lig4; the interaction is direct.

The protein resides in the nucleus. In terms of biological role, involved in double-strand break repair via non-homologous end joining (NHEJ); the repair of a double-strand break in DNA in which the two broken ends are rejoined with little or no sequence complementarity. The chain is Non-homologous end-joining factor xrc4 from Schizosaccharomyces pombe (strain 972 / ATCC 24843) (Fission yeast).